The following is a 173-amino-acid chain: Placenta-specific protein 1 (173 aa).

The N-terminal stretch at 1 to 23 (MKLIKFLGGVVFFTLMFSGYSEQ) is a signal peptide.

The protein belongs to the PLAC1 family.

The protein localises to the secreted. May play a role in placental development. The chain is Placenta-specific protein 1 from Rattus norvegicus (Rat).